The following is a 143-amino-acid chain: Hemoglobin subunit alpha-1 (143 aa).

S2 is modified (N-acetylserine). A Globin domain is found at 2 to 143 (SLSTKDKETV…VSLALAEKYR (142 aa)). Position 60 (H60) interacts with O2. H89 contacts heme b.

The protein belongs to the globin family. In terms of assembly, hb1 is a heterotetramer of two alpha-1 chains and two beta-1 chains. In terms of tissue distribution, red blood cells.

Its function is as follows. Involved in oxygen transport from gills to the various peripheral tissues. This is Hemoglobin subunit alpha-1 from Liparis tunicatus (Kelp snailfish).